A 421-amino-acid polypeptide reads, in one-letter code: Plant UBX domain-containing protein 5 (421 aa).

The UBA domain occupies 4-45 (ETNENLINSFIEITSSSREEANFFLESHTWNLDAAVSTFLDN). 2 disordered regions span residues 46–171 (DAAA…MMVQ) and 292–338 (ENFT…PSRG). Polar residues predominate over residues 69–84 (QSPSQSHSPDYTPSET). Residues 85–102 (SPSPSRSRSASPSSRAAP) show a composition bias toward low complexity. Residues 231 to 295 (RIMHTITFWL…DLVRRGENFT (65 aa)) enclose the SEP domain. Residues 312–328 (GASGSGSSSAPQASSAP) are compositionally biased toward low complexity. Positions 343–420 (PAAPTTSIQL…GIANAVVIQK (78 aa)) constitute a UBX domain.

In terms of assembly, interacts with CDC48A (non-hexameric) via its UBX domain.

The polypeptide is Plant UBX domain-containing protein 5 (Arabidopsis thaliana (Mouse-ear cress)).